A 203-amino-acid chain; its full sequence is Somatotropin (203 aa).

The signal sequence occupies residues 1–17 (MDRVVLMLSVLSLGVSS). Gln18 is subject to Pyrrolidone carboxylic acid. Position 36 (His36) interacts with Zn(2+). Cys68 and Cys176 form a disulfide bridge. A Zn(2+)-binding site is contributed by Glu185. Cys193 and Cys201 are joined by a disulfide.

Belongs to the somatotropin/prolactin family.

The protein localises to the secreted. Its function is as follows. Growth hormone plays an important role in growth control and is involved in the regulation of several anabolic processes. Implicated as an osmoregulatory substance important for seawater adaptation. This chain is Somatotropin (gh), found in Pagrus major (Red sea bream).